The chain runs to 74 residues: Brevinin-2Ef (74 aa).

Residues 1-22 form the signal peptide; it reads MFTMKKSLLLIFFLGTISLSLC. A propeptide spanning residues 23–41 is cleaved from the precursor; it reads QEERNADDDDGEMTEEEKR. Cys-68 and Cys-74 are disulfide-bonded.

The protein belongs to the frog skin active peptide (FSAP) family. Brevinin subfamily. Expressed by the skin glands.

Its subcellular location is the secreted. Shows antibacterial activity against representative Gram-negative and Gram-positive bacterial species, and hemolytic activity. The sequence is that of Brevinin-2Ef from Pelophylax lessonae (Pool frog).